Reading from the N-terminus, the 648-residue chain is Actin-related protein 5 (648 aa).

Residues 34–59 (LTKPRKDRKKEAAASEGSASQTTVEQ) are disordered. Coiled-coil stretches lie at residues 277 to 311 (TAEQ…EQQL) and 340 to 364 (TLED…RAQS). 2 disordered regions span residues 357–385 (RAQE…PEGM) and 403–455 (GRKQ…GMND). Residues 414–428 (EQAKRHTHAAQERMR) show a composition bias toward basic and acidic residues. A phosphoserine mark is found at Ser-471 and Ser-473.

It belongs to the actin family. ARP5 subfamily. As to quaternary structure, component of the chromatin remodeling Ino80 complex.

The protein localises to the nucleus. Its function is as follows. Proposed core component of the chromatin remodeling Ino80 complex which is involved in transcriptional regulation, DNA replication and probably DNA repair. The sequence is that of Actin-related protein 5 from Drosophila melanogaster (Fruit fly).